A 377-amino-acid polypeptide reads, in one-letter code: uncharacterized protein (377 aa).

This is an uncharacterized protein from Caenorhabditis elegans.